The primary structure comprises 202 residues: Large ribosomal subunit protein bL25 (202 aa).

The disordered stretch occupies residues 180–202; it reads PKQEAFEEDAEPSPGEEPEGENQ. Residues 185-202 are compositionally biased toward acidic residues; the sequence is FEEDAEPSPGEEPEGENQ.

It belongs to the bacterial ribosomal protein bL25 family. CTC subfamily. In terms of assembly, part of the 50S ribosomal subunit; part of the 5S rRNA/L5/L18/L25 subcomplex. Contacts the 5S rRNA. Binds to the 5S rRNA independently of L5 and L18.

Its function is as follows. This is one of the proteins that binds to the 5S RNA in the ribosome where it forms part of the central protuberance. In Bacillus velezensis (strain DSM 23117 / BGSC 10A6 / LMG 26770 / FZB42) (Bacillus amyloliquefaciens subsp. plantarum), this protein is Large ribosomal subunit protein bL25.